We begin with the raw amino-acid sequence, 418 residues long: F420-non-reducing hydrogenase vhu subunit A (418 aa).

Ni(2+)-binding residues include Cys-61 and Cys-64.

This sequence belongs to the [NiFe]/[NiFeSe] hydrogenase large subunit family. The F420-non-reducing hydrogenase vhu is composed of four subunits; VhuA, VhuD, VhuG and VhuU. Requires Ni(2+) as cofactor.

This chain is F420-non-reducing hydrogenase vhu subunit A (vhuA), found in Methanocaldococcus jannaschii (strain ATCC 43067 / DSM 2661 / JAL-1 / JCM 10045 / NBRC 100440) (Methanococcus jannaschii).